We begin with the raw amino-acid sequence, 263 residues long: 3-methyl-2-oxobutanoate hydroxymethyltransferase (263 aa).

Positions 45 and 84 each coordinate Mg(2+). 3-methyl-2-oxobutanoate is bound by residues 45 to 46, aspartate 84, and lysine 112; that span reads DS. Mg(2+) is bound at residue glutamate 114. Glutamate 181 functions as the Proton acceptor in the catalytic mechanism.

Belongs to the PanB family. As to quaternary structure, homodecamer; pentamer of dimers. The cofactor is Mg(2+).

It is found in the cytoplasm. It carries out the reaction 3-methyl-2-oxobutanoate + (6R)-5,10-methylene-5,6,7,8-tetrahydrofolate + H2O = 2-dehydropantoate + (6S)-5,6,7,8-tetrahydrofolate. It functions in the pathway cofactor biosynthesis; (R)-pantothenate biosynthesis; (R)-pantoate from 3-methyl-2-oxobutanoate: step 1/2. Its function is as follows. Catalyzes the reversible reaction in which hydroxymethyl group from 5,10-methylenetetrahydrofolate is transferred onto alpha-ketoisovalerate to form ketopantoate. In Buchnera aphidicola subsp. Acyrthosiphon pisum (strain 5A), this protein is 3-methyl-2-oxobutanoate hydroxymethyltransferase.